Consider the following 411-residue polypeptide: Secretion apparatus protein BsaZ (411 aa).

The next 4 helical transmembrane spans lie at 28–48 (IVAL…VDLT), 80–100 (IAAP…LVQS), 137–157 (ALLY…LYHA), and 175–195 (IVLT…VLIL). The interval 341-411 (AANRGGPPPE…APARTGDQNA (71 aa)) is disordered. Residues 370-404 (DACADNAFPDDAPPGAAAPNAGSPDSPAPDGGAPA) are compositionally biased toward low complexity.

Belongs to the type III secretion exporter family.

It is found in the cell membrane. Its function is as follows. Part of the bsa type III secretion system, is involved in the intracellular replication of invading bacteria inside the host cell. Probably necessary for the lysis of the vacuole membrane and escape into the host cell cytoplasm. The chain is Secretion apparatus protein BsaZ (bsaZ) from Burkholderia pseudomallei (strain 1106a).